The chain runs to 336 residues: Biotin synthase (336 aa).

Residues 57 to 286 form the Radical SAM core domain; the sequence is HHGKSIDLCS…RAIVRTAGGR (230 aa). Residues cysteine 75, cysteine 79, and cysteine 82 each contribute to the [4Fe-4S] cluster site. The [2Fe-2S] cluster site is built by serine 119, cysteine 151, cysteine 211, and arginine 281.

Belongs to the radical SAM superfamily. Biotin synthase family. As to quaternary structure, homodimer. [4Fe-4S] cluster serves as cofactor. It depends on [2Fe-2S] cluster as a cofactor.

It catalyses the reaction (4R,5S)-dethiobiotin + (sulfur carrier)-SH + 2 reduced [2Fe-2S]-[ferredoxin] + 2 S-adenosyl-L-methionine = (sulfur carrier)-H + biotin + 2 5'-deoxyadenosine + 2 L-methionine + 2 oxidized [2Fe-2S]-[ferredoxin]. The protein operates within cofactor biosynthesis; biotin biosynthesis; biotin from 7,8-diaminononanoate: step 2/2. Functionally, catalyzes the conversion of dethiobiotin (DTB) to biotin by the insertion of a sulfur atom into dethiobiotin via a radical-based mechanism. This Desulfotalea psychrophila (strain LSv54 / DSM 12343) protein is Biotin synthase.